The sequence spans 376 residues: UDP-N-acetylglucosamine--N-acetylmuramyl-(pentapeptide) pyrophosphoryl-undecaprenol N-acetylglucosamine transferase (376 aa).

UDP-N-acetyl-alpha-D-glucosamine-binding positions include 14-16, Asn128, Arg169, Ser201, Ile256, and Gln301; that span reads TGG.

Belongs to the glycosyltransferase 28 family. MurG subfamily.

The protein resides in the cell inner membrane. The enzyme catalyses di-trans,octa-cis-undecaprenyl diphospho-N-acetyl-alpha-D-muramoyl-L-alanyl-D-glutamyl-meso-2,6-diaminopimeloyl-D-alanyl-D-alanine + UDP-N-acetyl-alpha-D-glucosamine = di-trans,octa-cis-undecaprenyl diphospho-[N-acetyl-alpha-D-glucosaminyl-(1-&gt;4)]-N-acetyl-alpha-D-muramoyl-L-alanyl-D-glutamyl-meso-2,6-diaminopimeloyl-D-alanyl-D-alanine + UDP + H(+). It functions in the pathway cell wall biogenesis; peptidoglycan biosynthesis. Functionally, cell wall formation. Catalyzes the transfer of a GlcNAc subunit on undecaprenyl-pyrophosphoryl-MurNAc-pentapeptide (lipid intermediate I) to form undecaprenyl-pyrophosphoryl-MurNAc-(pentapeptide)GlcNAc (lipid intermediate II). The chain is UDP-N-acetylglucosamine--N-acetylmuramyl-(pentapeptide) pyrophosphoryl-undecaprenol N-acetylglucosamine transferase from Phocaeicola vulgatus (strain ATCC 8482 / DSM 1447 / JCM 5826 / CCUG 4940 / NBRC 14291 / NCTC 11154) (Bacteroides vulgatus).